The sequence spans 378 residues: Dual-specificity RNA methyltransferase RlmN (378 aa).

Glu96 functions as the Proton acceptor in the catalytic mechanism. In terms of domain architecture, Radical SAM core spans 102 to 340 (DNGRGTLCVS…ATVRTTRGDD (239 aa)). Cys109 and Cys345 are joined by a disulfide. Residues Cys116, Cys120, and Cys123 each contribute to the [4Fe-4S] cluster site. Residues 170–171 (GE), Ser202, 224–226 (SLH), and Asn302 contribute to the S-adenosyl-L-methionine site. The active-site S-methylcysteine intermediate is Cys345.

Belongs to the radical SAM superfamily. RlmN family. [4Fe-4S] cluster is required as a cofactor.

The protein localises to the cytoplasm. It catalyses the reaction adenosine(2503) in 23S rRNA + 2 reduced [2Fe-2S]-[ferredoxin] + 2 S-adenosyl-L-methionine = 2-methyladenosine(2503) in 23S rRNA + 5'-deoxyadenosine + L-methionine + 2 oxidized [2Fe-2S]-[ferredoxin] + S-adenosyl-L-homocysteine. It carries out the reaction adenosine(37) in tRNA + 2 reduced [2Fe-2S]-[ferredoxin] + 2 S-adenosyl-L-methionine = 2-methyladenosine(37) in tRNA + 5'-deoxyadenosine + L-methionine + 2 oxidized [2Fe-2S]-[ferredoxin] + S-adenosyl-L-homocysteine. Functionally, specifically methylates position 2 of adenine 2503 in 23S rRNA and position 2 of adenine 37 in tRNAs. m2A2503 modification seems to play a crucial role in the proofreading step occurring at the peptidyl transferase center and thus would serve to optimize ribosomal fidelity. This chain is Dual-specificity RNA methyltransferase RlmN, found in Hahella chejuensis (strain KCTC 2396).